Consider the following 173-residue polypeptide: ADP-ribosylation factor-like protein 11 (173 aa).

Gly2 is lipidated: N-myristoyl glycine. Residues 17 to 24 (GLDCAGKT), 61 to 65 (DIGGQ), and 120 to 123 (NKQE) each bind GTP.

This sequence belongs to the small GTPase superfamily. Arf family.

In terms of biological role, may play a role in apoptosis. May act as a tumor suppressor. The protein is ADP-ribosylation factor-like protein 11 (Arl11) of Rattus norvegicus (Rat).